The primary structure comprises 95 residues: ESAT-6-like protein EsxC (95 aa).

Belongs to the WXG100 family. ESAT-6 subfamily.

The protein resides in the secreted. The chain is ESAT-6-like protein EsxC from Mycolicibacterium paratuberculosis (strain ATCC BAA-968 / K-10) (Mycobacterium paratuberculosis).